A 54-amino-acid chain; its full sequence is Large ribosomal subunit protein bL33 (54 aa).

Belongs to the bacterial ribosomal protein bL33 family.

In Petrotoga mobilis (strain DSM 10674 / SJ95), this protein is Large ribosomal subunit protein bL33.